Here is a 139-residue protein sequence, read N- to C-terminus: Histone H2B (139 aa).

Over residues 1–10 (MAPKVAEKKP) the composition is skewed to basic and acidic residues. Residues 1–47 (MAPKVAEKKPSLAGKAPAGKAPAEKKEAGKKTTTATGEKKKRTKARK) form a disordered region. An N6-acetyllysine; alternate mark is found at lysine 8 and lysine 9. Glycyl lysine isopeptide (Lys-Gly) (interchain with G-Cter in SUMO); alternate cross-links involve residues lysine 8 and lysine 9. Lysine 15 carries the post-translational modification N6-acetyllysine. Lysine 25 carries the N6-acetyllysine; alternate modification. A Glycyl lysine isopeptide (Lys-Gly) (interchain with G-Cter in SUMO); alternate cross-link involves residue lysine 25. A Glycyl lysine isopeptide (Lys-Gly) (interchain with G-Cter in SUMO) cross-link involves residue lysine 26. A Glycyl lysine isopeptide (Lys-Gly) (interchain with G-Cter in ubiquitin) cross-link involves residue lysine 133.

The protein belongs to the histone H2B family. In terms of assembly, the nucleosome is a histone octamer containing two molecules each of H2A, H2B, H3 and H4 assembled in one H3-H4 heterotetramer and two H2A-H2B heterodimers. The octamer wraps approximately 147 bp of DNA. Post-translationally, monoubiquitinated by the UBC2-BRE1 complex to form H2BK123ub1. H2BK123ub1 gives a specific tag for epigenetic transcriptional activation and is also prerequisite for H3K4me and H3K79me formation. H2BK123ub1 also modulates the formation of double-strand breaks during meiosis and is a prerequisite for DNA-damage checkpoint activation. Acetylated by GCN5 to form H2BK11ac and H2BK16ac. H2BK16ac can also be formed by ESA1. Acetylation of N-terminal lysines and particularly formation of H2BK11acK16ac has a positive effect on transcription. In terms of processing, sumoylation to form H2BK6su or H2BK7su, and probably also H2BK16su or H2BK17su, occurs preferentially near the telomeres and represses gene transcription.

The protein localises to the nucleus. Its subcellular location is the chromosome. Functionally, core component of nucleosome. Nucleosomes wrap and compact DNA into chromatin, limiting DNA accessibility to the cellular machineries which require DNA as a template. Histones thereby play a central role in transcription regulation, DNA repair, DNA replication and chromosomal stability. DNA accessibility is regulated via a complex set of post-translational modifications of histones, also called histone code, and nucleosome remodeling. This is Histone H2B (HTB1) from Yarrowia lipolytica (strain CLIB 122 / E 150) (Yeast).